An 887-amino-acid polypeptide reads, in one-letter code: Pre-mRNA-splicing factor cwf22 (887 aa).

The interval 1-27 is disordered; sequence MEKEDKSFGIGMLDYNRENPESSGHSR. One can recognise an MIF4G domain in the interval 124–307; that stretch reads KKSINGLINK…EVLFQTRKDK (184 aa). The interval 366-401 is disordered; it reads ILGEEDDDENEEDEEDSEETSESEEDESVNDEKPQV. Residues 368–394 show a composition bias toward acidic residues; the sequence is GEEDDDENEEDEEDSEETSESEEDESV. An MI domain is found at 411–527; the sequence is NLRKSIYLTI…GWEVYDCVRL (117 aa). Disordered stretches follow at residues 607–834 and 867–887; these read MPKS…KTYH and GELY…PRAD. Positions 618–662 are enriched in low complexity; that stretch reads EGYSSGSETGSTYSSSYSSTYSRGRSYSRSTRSYSKSRSYSRSRS. Phosphoserine is present on S662. Phosphothreonine is present on T664. Over residues 677–690 the composition is skewed to basic and acidic residues; it reads KDRELSPRGRERSS. The segment covering 691 to 712 has biased composition (low complexity); sequence NRNSYSDLSRSSSLSRGRSRSY. Basic and acidic residues predominate over residues 717-726; it reads RLIESEDKGY. A compositionally biased stretch (basic residues) spans 736-746; sequence RKYRSRQRYRR. Composition is skewed to low complexity over residues 747-762 and 769-791; these read SYAG…SRSP and SMSC…SRSP. The segment covering 799-809 has biased composition (polar residues); that stretch reads DSLSYNRQYSP.

Belongs to the CWC22 family. In terms of assembly, belongs to the 40S cdc5-associated complex (or cwf complex), a spliceosome sub-complex reminiscent of a late-stage spliceosome composed of the U2, U5 and U6 snRNAs and at least brr2, cdc5, cwf2/prp3, cwf3/syf1, cwf4/syf3, cwf5/ecm2, spp42/cwf6, cwf7/spf27, cwf8, cwf9, cwf10, cwf11, cwf12, prp45/cwf13, cwf14, cwf15, cwf16, cwf17, cwf18, cwf19, cwf20, cwf21, cwf22, cwf23, cwf24, cwf25, cwf26, cyp7/cwf27, cwf28, cwf29/ist3, lea1, msl1, prp5/cwf1, prp10, prp12/sap130, prp17, prp22, sap61, sap62, sap114, sap145, slu7, smb1, smd1, smd3, smf1, smg1 and syf2.

It localises to the cytoplasm. The protein resides in the nucleus. Functionally, may be involved in pre-mRNA splicing. This chain is Pre-mRNA-splicing factor cwf22 (cwf22), found in Schizosaccharomyces pombe (strain 972 / ATCC 24843) (Fission yeast).